Reading from the N-terminus, the 30-residue chain is uncharacterized protein (30 aa).

This is an uncharacterized protein from Dictyostelium discoideum (Social amoeba).